The primary structure comprises 207 residues: Chaperone protein TorD (207 aa).

This sequence belongs to the TorD/DmsD family. TorD subfamily.

It localises to the cytoplasm. In terms of biological role, involved in the biogenesis of TorA. Acts on TorA before the insertion of the molybdenum cofactor and, as a result, probably favors a conformation of the apoenzyme that is competent for acquiring the cofactor. The protein is Chaperone protein TorD of Aggregatibacter aphrophilus (strain NJ8700) (Haemophilus aphrophilus).